The chain runs to 310 residues: Probable manganese-dependent inorganic pyrophosphatase (310 aa).

Mn(2+) is bound by residues H9, D13, D15, D76, H98, and D150.

This sequence belongs to the PPase class C family. Requires Mn(2+) as cofactor.

The protein localises to the cytoplasm. It catalyses the reaction diphosphate + H2O = 2 phosphate + H(+). The sequence is that of Probable manganese-dependent inorganic pyrophosphatase from Streptococcus thermophilus (strain CNRZ 1066).